The primary structure comprises 369 residues: Zeaxanthin 7,8(7',8')-cleavage dioxygenase, chromoplastic (369 aa).

Residues histidine 62, histidine 112, histidine 177, and histidine 356 each coordinate Fe cation.

It belongs to the carotenoid oxygenase family. The cofactor is Fe(2+). As to expression, in the style branches.

The protein localises to the plastid. It localises to the chromoplast. It catalyses the reaction all-trans-zeaxanthin + 2 O2 = crocetin dialdehyde + 2 3beta-hydroxy-beta-cyclocitral. Cleaves zeaxanthin symmetrically at the 7-8 and 7'-8' double bonds to produce crocetin dialdehyde and hydroxy-beta-cyclocitral, two water-soluble precursors sequestred in vacuoles and involved in the synthesis of saffron pigment and aroma. The sequence is that of Zeaxanthin 7,8(7',8')-cleavage dioxygenase, chromoplastic (ZCD) from Crocus sativus (Saffron).